The sequence spans 315 residues: Calcium homeostasis modulator protein 6 (315 aa).

The Cytoplasmic segment spans residues 1–21 (MEKFRAVLDLHVKHHSALGYG). The chain crosses the membrane as a helical span at residues 22-37 (LVTLLTAGGERIFSAV). Topologically, residues 38–46 (AFQCPCSAA) are extracellular. 3 cysteine pairs are disulfide-bonded: Cys41–Cys126, Cys43–Cys155, and Cys139–Cys146. The chain crosses the membrane as a helical span at residues 47–68 (WNLPYGLVFLLVPALALFLLGY). Residues 69–102 (VLSARTWRLLTGCCSSARASCGSALRGSLVCTQI) are Cytoplasmic-facing. A helical membrane pass occupies residues 103–127 (SAAAALAPLTWVAVALLGGAFYECA). Over 128–169 (ATGSAAFAQRLCLGRNRSCAAELPLVPCNQAKASDVQDLLKD) the chain is Extracellular. The helical transmembrane segment at 170 to 192 (LKAQSQVLGWILIAVVIIILLIF) threads the bilayer. The Cytoplasmic segment spans residues 193–315 (TSVTRCLSPV…SSGINSTPEL (123 aa)).

This sequence belongs to the CALHM family. Oligomerizes to form decameric and undecameric channels. In terms of processing, N-glycosylated. Placenta.

It localises to the cell membrane. It catalyses the reaction ATP(in) = ATP(out). Its function is as follows. Pore-forming subunit of an ATP-permeable channel. In response to pathogen-derived and proinflammatory stimuli, relocates from intracellular compartments to NK-dendritic cell and NK-macrophage immune synapses where it mediates ATP efflux and NK cell activation involved in antimicrobial and antitumor responses. May assemble to form gap junction channel-like structures with gating and ion conductance likely regulated by membrane lipids and voltage rather than by extracellular calcium levels. The sequence is that of Calcium homeostasis modulator protein 6 from Homo sapiens (Human).